A 133-amino-acid chain; its full sequence is Nucleoid-associated protein Mb3743c (133 aa).

Residues 98-133 form a disordered region; the sequence is GAMRPPAPPAAPPGAPGMPGMPGMPGAPGAPPVPGI. Residues 102-113 show a composition bias toward pro residues; the sequence is PPAPPAAPPGAP.

This sequence belongs to the YbaB/EbfC family. In terms of assembly, homodimer.

It is found in the cytoplasm. The protein localises to the nucleoid. In terms of biological role, binds to DNA and alters its conformation. May be involved in regulation of gene expression, nucleoid organization and DNA protection. The sequence is that of Nucleoid-associated protein Mb3743c from Mycobacterium bovis (strain ATCC BAA-935 / AF2122/97).